A 449-amino-acid polypeptide reads, in one-letter code: CCA-adding enzyme (449 aa).

ATP is bound by residues Ser-53 and Lys-56. CTP is bound by residues Ser-53 and Lys-56. Mg(2+) is bound by residues Asp-65, Asp-67, and Asp-119. ATP-binding residues include His-142, Lys-161, and Tyr-170. His-142, Lys-161, and Tyr-170 together coordinate CTP.

The protein belongs to the tRNA nucleotidyltransferase/poly(A) polymerase family. Archaeal CCA-adding enzyme subfamily. In terms of assembly, homodimer. Requires Mg(2+) as cofactor.

The catalysed reaction is a tRNA precursor + 2 CTP + ATP = a tRNA with a 3' CCA end + 3 diphosphate. The enzyme catalyses a tRNA with a 3' CCA end + 2 CTP + ATP = a tRNA with a 3' CCACCA end + 3 diphosphate. In terms of biological role, catalyzes the addition and repair of the essential 3'-terminal CCA sequence in tRNAs without using a nucleic acid template. Adds these three nucleotides in the order of C, C, and A to the tRNA nucleotide-73, using CTP and ATP as substrates and producing inorganic pyrophosphate. tRNA 3'-terminal CCA addition is required both for tRNA processing and repair. Also involved in tRNA surveillance by mediating tandem CCA addition to generate a CCACCA at the 3' terminus of unstable tRNAs. While stable tRNAs receive only 3'-terminal CCA, unstable tRNAs are marked with CCACCA and rapidly degraded. This is CCA-adding enzyme from Pyrococcus horikoshii (strain ATCC 700860 / DSM 12428 / JCM 9974 / NBRC 100139 / OT-3).